The chain runs to 213 residues: Small ribosomal subunit protein uS4 (213 aa).

One can recognise an S4 RNA-binding domain in the interval 97–165 (RRLDNVVYRM…AKEQLRIKNA (69 aa)).

Belongs to the universal ribosomal protein uS4 family. As to quaternary structure, part of the 30S ribosomal subunit. Contacts protein S5. The interaction surface between S4 and S5 is involved in control of translational fidelity.

One of the primary rRNA binding proteins, it binds directly to 16S rRNA where it nucleates assembly of the body of the 30S subunit. Functionally, with S5 and S12 plays an important role in translational accuracy. This chain is Small ribosomal subunit protein uS4, found in Psychrobacter sp. (strain PRwf-1).